A 570-amino-acid polypeptide reads, in one-letter code: Periplasmic trehalase (570 aa).

The first 34 residues, 1–34 (MIPPEIRRSVLLQKAIKLALAGTLLTFASFSATA), serve as a signal peptide directing secretion. Residues Arg159, 166–167 (WD), Asn203, 212–214 (RSQ), 284–286 (RPE), and Gly317 contribute to the substrate site. Residues Asp319 and Glu503 each act as proton donor/acceptor in the active site. Glu518 lines the substrate pocket. The disordered stretch occupies residues 544–570 (KPCDSVPSTRPASLSATPTKTPSAATQ). The segment covering 554–570 (PASLSATPTKTPSAATQ) has biased composition (low complexity).

It belongs to the glycosyl hydrolase 37 family. Monomer.

It localises to the periplasm. The catalysed reaction is alpha,alpha-trehalose + H2O = alpha-D-glucose + beta-D-glucose. In terms of biological role, provides the cells with the ability to utilize trehalose at high osmolarity by splitting it into glucose molecules that can subsequently be taken up by the phosphotransferase-mediated uptake system. The sequence is that of Periplasmic trehalase from Salmonella paratyphi B (strain ATCC BAA-1250 / SPB7).